The primary structure comprises 196 residues: GTP cyclohydrolase 1 (196 aa).

Residues C85, H88, and C156 each contribute to the Zn(2+) site.

Belongs to the GTP cyclohydrolase I family. As to quaternary structure, toroid-shaped homodecamer, composed of two pentamers of five dimers.

It catalyses the reaction GTP + H2O = 7,8-dihydroneopterin 3'-triphosphate + formate + H(+). Its pathway is cofactor biosynthesis; 7,8-dihydroneopterin triphosphate biosynthesis; 7,8-dihydroneopterin triphosphate from GTP: step 1/1. This Bacteroides thetaiotaomicron (strain ATCC 29148 / DSM 2079 / JCM 5827 / CCUG 10774 / NCTC 10582 / VPI-5482 / E50) protein is GTP cyclohydrolase 1.